The sequence spans 524 residues: BEL1-like homeodomain protein 3 (524 aa).

The segment at 171–187 (SRYLKPTQQLLDEVVSV) is SR/KY domain. Basic and acidic residues-rich tracts occupy residues 195–205 (NKKMKNDKGQD) and 216–235 (EDDK…ELQS). Residues 195–236 (NKKMKNDKGQDFHNGSSDNITEDDKSQSQELSPSERQELQSK) form a disordered region. Residues 229-300 (ERQELQSKKS…CLRDAIKEQI (72 aa)) form a BELL domain region. Residues 346–408 (AWRPQRGLPE…NARVRLWKPM (63 aa)) constitute a DNA-binding region (homeobox). Residues 429-463 (QDTKKMQETSQLKHEDSSSSQQQNQGNNNNNIPYT) are disordered. The segment covering 430-445 (DTKKMQETSQLKHEDS) has biased composition (basic and acidic residues). The segment covering 446-459 (SSSQQQNQGNNNNN) has biased composition (low complexity).

It belongs to the TALE/BELL homeobox family. May form heterodimeric complex with the TALE/KNOX protein STM. Interacts with OFP1, OFP2, OFP3, OFP4, OFP5 and OFP15.

The protein localises to the nucleus. Transcription factor that is responsive of the nuclear import of SHOOT MERISTEMLESS (STM). The sequence is that of BEL1-like homeodomain protein 3 (BLH3) from Arabidopsis thaliana (Mouse-ear cress).